We begin with the raw amino-acid sequence, 237 residues long: MNVNYLNDSDLDFLQHCSEEQLANFARLLTHNEKGKTRLSSVLMRNELFKSMEGHPEQHRRNWQLIAGELQHFGGDSIANKLRGHGKLYRAILLDVSKRLKLKADKEMSTFEIEQQLLEQFLRNTWKKMDEEHKQEFLHAVDARVNELEELLPLLMKDKLLAKGVSHLLSSQLTRILRTHAAMSVLGHGLLRGAGLGGPVGAALNGVKAVSGSAYRVTIPAVLQIACLRRMVSATQV.

This sequence belongs to the UPF0174 family.

The polypeptide is UPF0174 protein YaaW (yaaW) (Escherichia coli (strain K12)).